We begin with the raw amino-acid sequence, 125 residues long: MSNLLKEFNEQQIKLLSNREIPKFKSGDTLRVTMKIFDSAGERIQTFEGVCIKKRNNGLHSSFTLRKISYNESIQLQIFLYSPTIESIEVVKFGKVRRAKLYYMLSLFGKSARIKERIDRSKKSS.

It belongs to the bacterial ribosomal protein bL19 family.

This protein is located at the 30S-50S ribosomal subunit interface and may play a role in the structure and function of the aminoacyl-tRNA binding site. This chain is Large ribosomal subunit protein bL19, found in Ehrlichia ruminantium (strain Gardel).